Consider the following 465-residue polypeptide: Phosphatidylserine synthase 1 (465 aa).

Topologically, residues 1–35 (MVSAMRSRTLSKDDVNYKMHFRMINEQQVEDITID) are cytoplasmic. Residues 36–56 (FFYKPHTITLLTFTTVSLMYF) traverse the membrane as a helical segment. The Lumenal segment spans residues 57–68 (AFTRENTSQEDN). A helical membrane pass occupies residues 69–89 (IWKGILSVIFFFLIISVLAFP). Topologically, residues 90–102 (NGPFTRPHPAIWR) are cytoplasmic. A helical membrane pass occupies residues 103–123 (MVFGLSVLYFLFLVFLLFLNV). At 124–186 (EQVKAVMYWL…AMKALLIRSY (63 aa)) the chain is on the lumenal side. The chain crosses the membrane as a helical span at residues 187–207 (GLCWTISITWEMTELFFMHLL). Over 208 to 216 (PNFAECWWD) the chain is Cytoplasmic. A helical transmembrane segment spans residues 217 to 237 (QVILDILLCNGGGILLGMVVC). Residues 238–286 (RFLEMRTYHWASFKDIHTTTGKIKRAVLQFTPASWIYVRWFDPKSSFQR) lie on the Lumenal side of the membrane. Residues 287–307 (VAGVYLFMIIWQLTELNTFFL) form a helical membrane-spanning segment. Topologically, residues 308–319 (KHIFVFQASHPL) are cytoplasmic. A helical transmembrane segment spans residues 320-342 (SWCRILFIGIITAPTVRQYYAYL). Over 343 to 355 (TDTQCKRVGTQCW) the chain is Lumenal. A helical transmembrane segment spans residues 356–376 (VFGAIAFLEATVCIKFGQDLF). Residues 377–383 (SKTHLLY) are Cytoplasmic-facing. The chain crosses the membrane as a helical span at residues 384 to 404 (VFLWLFSVAVITFLCLYGMVW). The Lumenal portion of the chain corresponds to 405–465 (YADYCGQREK…GKVTNGVGKK (61 aa)). The tract at residues 440 to 465 (PVKQNEGTSRRKNRHKGKVTNGVGKK) is disordered. The segment covering 449–465 (RRKNRHKGKVTNGVGKK) has biased composition (basic residues).

Belongs to the phosphatidyl serine synthase family.

It localises to the endoplasmic reticulum membrane. It carries out the reaction a 1,2-diacyl-sn-glycero-3-phosphoethanolamine + L-serine = a 1,2-diacyl-sn-glycero-3-phospho-L-serine + ethanolamine. It catalyses the reaction a 1,2-diacyl-sn-glycero-3-phosphocholine + L-serine = a 1,2-diacyl-sn-glycero-3-phospho-L-serine + choline. It participates in phospholipid metabolism; phosphatidylserine biosynthesis. Catalyzes a base-exchange reaction in which the polar head group of phosphatidylethanolamine (PE) or phosphatidylcholine (PC) is replaced by L-serine. Catalyzes mainly the conversion of phosphatidylcholine but also converts, in vitro and to a lesser extent, phosphatidylethanolamine. This chain is Phosphatidylserine synthase 1 (ptdss1), found in Xenopus tropicalis (Western clawed frog).